A 362-amino-acid chain; its full sequence is UDP-N-acetylglucosamine--N-acetylmuramyl-(pentapeptide) pyrophosphoryl-undecaprenol N-acetylglucosamine transferase (362 aa).

UDP-N-acetyl-alpha-D-glucosamine-binding positions include 14 to 16 (TGG), R170, S199, and Q289.

It belongs to the glycosyltransferase 28 family. MurG subfamily.

It is found in the cell inner membrane. It carries out the reaction di-trans,octa-cis-undecaprenyl diphospho-N-acetyl-alpha-D-muramoyl-L-alanyl-D-glutamyl-meso-2,6-diaminopimeloyl-D-alanyl-D-alanine + UDP-N-acetyl-alpha-D-glucosamine = di-trans,octa-cis-undecaprenyl diphospho-[N-acetyl-alpha-D-glucosaminyl-(1-&gt;4)]-N-acetyl-alpha-D-muramoyl-L-alanyl-D-glutamyl-meso-2,6-diaminopimeloyl-D-alanyl-D-alanine + UDP + H(+). Its pathway is cell wall biogenesis; peptidoglycan biosynthesis. Functionally, cell wall formation. Catalyzes the transfer of a GlcNAc subunit on undecaprenyl-pyrophosphoryl-MurNAc-pentapeptide (lipid intermediate I) to form undecaprenyl-pyrophosphoryl-MurNAc-(pentapeptide)GlcNAc (lipid intermediate II). This chain is UDP-N-acetylglucosamine--N-acetylmuramyl-(pentapeptide) pyrophosphoryl-undecaprenol N-acetylglucosamine transferase, found in Borrelia turicatae (strain 91E135).